Consider the following 643-residue polypeptide: Methyl-accepting chemotaxis protein McpA (643 aa).

Residues 24–44 (ILLSACGVVVLAFALFTLYND) traverse the membrane as a helical segment. The Cache domain maps to 49-273 (NTIRQNIEAS…GLPSAQWYIG (225 aa)). A helical membrane pass occupies residues 293 to 313 (IIAMLIAVAAIAGLLGLLIPV). An HAMP domain is found at 312–366 (PVLMSPLTTMGRAMRDIAEGEGDLTRRLAVQNKDEFGELATSFNRFVERIHASIS). One can recognise a Methyl-accepting transducer domain in the interval 371-607 (ATRLVHDLSE…SLNLDITQIN (237 aa)).

It belongs to the methyl-accepting chemotaxis (MCP) protein family.

Its subcellular location is the cell membrane. Functionally, chemotactic-signal transducers respond to changes in the concentration of attractants and repellents in the environment, transduce a signal from the outside to the inside of the cell, and facilitate sensory adaptation through the variation of the level of methylation. McpA is a chemoreceptor that binds to 12 different L-amino acids and mediates chemotaxis toward these amino acids. The sequence is that of Methyl-accepting chemotaxis protein McpA from Pseudomonas putida (strain ATCC 47054 / DSM 6125 / CFBP 8728 / NCIMB 11950 / KT2440).